The following is a 453-amino-acid chain: Probable 1,4-beta-D-glucan cellobiohydrolase A (453 aa).

A signal peptide spans 1 to 17; the sequence is MYQRALLFSALATAVSA. Glutamate 226 (nucleophile) is an active-site residue. Catalysis depends on glutamate 231, which acts as the Proton donor. Asparagine 284 carries N-linked (GlcNAc...) asparagine glycosylation.

This sequence belongs to the glycosyl hydrolase 7 (cellulase C) family.

It localises to the secreted. The catalysed reaction is Hydrolysis of (1-&gt;4)-beta-D-glucosidic linkages in cellulose and cellotetraose, releasing cellobiose from the non-reducing ends of the chains.. Functionally, the biological conversion of cellulose to glucose generally requires three types of hydrolytic enzymes: (1) Endoglucanases which cut internal beta-1,4-glucosidic bonds; (2) Exocellobiohydrolases that cut the disaccharide cellobiose from the non-reducing end of the cellulose polymer chain; (3) Beta-1,4-glucosidases which hydrolyze the cellobiose and other short cello-oligosaccharides to glucose. This chain is Probable 1,4-beta-D-glucan cellobiohydrolase A (cbhA), found in Aspergillus clavatus (strain ATCC 1007 / CBS 513.65 / DSM 816 / NCTC 3887 / NRRL 1 / QM 1276 / 107).